Here is a 669-residue protein sequence, read N- to C-terminus: DNA ligase (669 aa).

Residues 34-38 (DAEYD), 83-84 (SL), and Glu-114 contribute to the NAD(+) site. Catalysis depends on Lys-116, which acts as the N6-AMP-lysine intermediate. Residues Arg-137, Glu-171, Lys-287, and Lys-311 each contribute to the NAD(+) site. Residues Cys-405, Cys-408, Cys-423, and Cys-428 each contribute to the Zn(2+) site. A BRCT domain is found at 591-669 (NVESYFAGKT…EERFLQELNK (79 aa)).

It belongs to the NAD-dependent DNA ligase family. LigA subfamily. The cofactor is Mg(2+). Requires Mn(2+) as cofactor.

The catalysed reaction is NAD(+) + (deoxyribonucleotide)n-3'-hydroxyl + 5'-phospho-(deoxyribonucleotide)m = (deoxyribonucleotide)n+m + AMP + beta-nicotinamide D-nucleotide.. Functionally, DNA ligase that catalyzes the formation of phosphodiester linkages between 5'-phosphoryl and 3'-hydroxyl groups in double-stranded DNA using NAD as a coenzyme and as the energy source for the reaction. It is essential for DNA replication and repair of damaged DNA. The protein is DNA ligase of Bacillus cereus (strain B4264).